The sequence spans 770 residues: Potassium transporter 25 (770 aa).

At 1-23 the chain is on the cytoplasmic side; it reads MDLEAAHGAAAAPGKRRRRARES. The chain crosses the membrane as a helical span at residues 24–44; that stretch reads WGASLLLAYQSLGVVYGDVAT. The Extracellular portion of the chain corresponds to 45 to 70; sequence SPLYVYKSAFAGDDIQHSAGNEEIYG. Residues 71 to 91 traverse the membrane as a helical segment; it reads VLSFVFWTLTLISLVKYVLIV. Residues 92-152 lie on the Cytoplasmic side of the membrane; the sequence is LRADDGGEGG…MLERYRVLQR (61 aa). A helical membrane pass occupies residues 153–173; sequence LLLLFALLGTCMVIGDGVLTP. The Extracellular portion of the chain corresponds to 174–194; that stretch reads AVSVYSAVSGLELSMEHEHHK. Residues 195–215 form a helical membrane-spanning segment; it reads YVQLPVTCAILIGLFALQHYG. At 216-218 the chain is on the cytoplasmic side; that stretch reads THR. Residues 219–239 traverse the membrane as a helical segment; it reads VGFIFAPIVCVWLLCISAIGV. Residues 240-267 lie on the Extracellular side of the membrane; the sequence is YNIVHWNHHVYRALSPYYMYQFLKKTQT. Residues 268–288 form a helical membrane-spanning segment; that stretch reads GGWMSLGGILLCVTGSEAMYA. Over 289–299 the chain is Cytoplasmic; it reads DLGHFSQSSIK. A helical transmembrane segment spans residues 300–320; it reads IAFMSVVYPALVLAYMGQAAY. Residues 321–346 lie on the Extracellular side of the membrane; that stretch reads ISQHHSFENAYHIGFYVSVPEKLRWP. The helical transmembrane segment at 347–367 threads the bilayer; it reads VLVIAILAAVVGSQAVITGTF. Topologically, residues 368–394 are cytoplasmic; the sequence is SIIKQCSSLSCFPGVKIVHTSSTVHGQ. A helical membrane pass occupies residues 395–415; it reads IYIPEINWILMILCLAVTLGF. Residues 416–425 are Extracellular-facing; it reads RNTKHLANAQ. Residues 426-446 traverse the membrane as a helical segment; sequence GLAVITVMLVTTCLMSLVIVL. The Cytoplasmic portion of the chain corresponds to 447-451; the sequence is CWNKS. A helical transmembrane segment spans residues 452–472; it reads IFLALGFLIFFGTIEVLYFSA. Topologically, residues 473-479 are extracellular; it reads SLVKFHE. The helical transmembrane segment at 480-500 threads the bilayer; it reads GAWVPITLSFIFMIVMCVWHY. The Cytoplasmic portion of the chain corresponds to 501–770; sequence GTIKKYEFDF…TLEVGMVYQV (270 aa).

This sequence belongs to the HAK/KUP transporter (TC 2.A.72.3) family.

It is found in the membrane. In terms of biological role, high-affinity potassium transporter. The polypeptide is Potassium transporter 25 (HAK25) (Oryza sativa subsp. japonica (Rice)).